The following is a 643-amino-acid chain: Sodium/iodide cotransporter (643 aa).

Residues 1-14 (MEAVETGERPTFGA) lie on the Extracellular side of the membrane. Residues 15 to 31 (WDYGVFALMLLVSTGIG) traverse the membrane as a helical segment. The Cytoplasmic portion of the chain corresponds to 32-56 (LWVGLARGGQRSAEDFFTGGRRLAA). Residues 57–80 (LPVGLSLSASFMSAVQVLGVPSEA) form a discontinuously helical membrane-spanning segment. Na(+) is bound by residues serine 69, valine 71, and glutamine 72. Iodide is bound at residue valine 76. Topologically, residues 81–84 (YRYG) are extracellular. A helical transmembrane segment spans residues 85–105 (LKFLWMCLGQLLNSVLTALLF). Methionine 90 lines the iodide pocket. The Cytoplasmic portion of the chain corresponds to 106-130 (MPVFYRLGLTSTYEYLEMRFSRAVR). The chain crosses the membrane as a helical span at residues 131–157 (LCGTLQYIVATMLYTGIVIYAPALILN). A Na(+)-binding site is contributed by tyrosine 144. Residues 158-163 (QVTGLD) are Extracellular-facing. A helical transmembrane segment spans residues 164-181 (IWASLLSTGIICTFYTAV). The Cytoplasmic portion of the chain corresponds to 182 to 189 (GGMKAVVW). The chain crosses the membrane as a helical span at residues 190-208 (TDVFQVVVMLSGFWVVLAR). Residues 209 to 243 (GVMLVGGPRQVLTLAQNHSRINLMDFNPDPRSRYT) are Extracellular-facing. A discontinuously helical transmembrane segment spans residues 244-266 (FWTFVVGGTLVWLSMYGVNQAQV). Residue tryptophan 255 coordinates iodide. Methionine 258 is a binding site for Na(+). Residues 267–278 (QRYVACRTEKQA) are Cytoplasmic-facing. Residues 279 to 301 (KLALLINQVGLFLIVSSAACCGI) form a helical membrane-spanning segment. At 302–335 (VMFVFYTDCDPLLLGRISAPDQYMPLLVLDIFED) the chain is on the extracellular side. Residues 336 to 363 (LPGVPGLFLACAYSGTLSTASTSINAMA) form a helical membrane-spanning segment. At 364–386 (AVTVEDLIKPRLRSLAPRKLVII) the chain is on the cytoplasmic side. A helical transmembrane segment spans residues 387 to 408 (SKGLSLIYGSACLTVAALSSLL). Residues 409 to 411 (GGG) lie on the Extracellular side of the membrane. A helical membrane pass occupies residues 412–437 (VLQGSFTVMGVISGPLLGAFILGMFL). Leucine 413 contributes to the iodide binding site. Serine 416 and phenylalanine 417 together coordinate Na(+). Residue phenylalanine 417 coordinates iodide. Over 438–441 (PACN) the chain is Cytoplasmic. The chain crosses the membrane as a helical span at residues 442-465 (TPGVLAGLGAGLALSLWVALGATL). The Extracellular segment spans residues 466 to 525 (YPPSEQTMRVLPSSAARCVALSVNASGLLDPALLPANDSSRAPSSGMDASRPALADSFYA). N-linked (GlcNAc...) asparagine glycosylation is found at asparagine 489 and asparagine 502. The chain crosses the membrane as a helical span at residues 526-550 (ISYLYYGALGTLTTVLCGALISCLT). At 551–643 (GPTKRSTLAP…GGRDQQETNL (93 aa)) the chain is on the cytoplasmic side. Residue serine 556 is modified to Phosphoserine; by PKA. The interval 623 to 643 (AGSWTPCVGHDGGRDQQETNL) is disordered. The span at 633 to 643 (DGGRDQQETNL) shows a compositional bias: basic and acidic residues.

The protein belongs to the sodium:solute symporter (SSF) (TC 2.A.21) family. As to quaternary structure, monomer. In terms of processing, glycosylated. In terms of tissue distribution, expression is primarily in thyroid tissue, but also to a lower extent in mammary gland and ovary. Expression is reduced in tumors.

The protein localises to the cell membrane. It localises to the cytoplasm. The catalysed reaction is iodide(out) + 2 Na(+)(out) = iodide(in) + 2 Na(+)(in). It carries out the reaction chlorate(out) + 2 Na(+)(out) = chlorate(in) + 2 Na(+)(in). It catalyses the reaction thiocyanate(out) + 2 Na(+)(out) = thiocyanate(in) + 2 Na(+)(in). The enzyme catalyses nitrate(out) + 2 Na(+)(out) = nitrate(in) + 2 Na(+)(in). The catalysed reaction is selenocyanate(out) + 2 Na(+)(out) = selenocyanate(in) + 2 Na(+)(in). Dysidenin and perchlorate inhibit iodide transport activity. Oxyanions inhibit iodide transport activity by blocking the binding sites for iodide and one of the sodium ions. In terms of biological role, sodium:iodide symporter that mediates the transport of iodide into the thyroid gland. Can also mediate the transport of chlorate, thiocynate, nitrate and selenocynate. The sequence is that of Sodium/iodide cotransporter (SLC5A5) from Homo sapiens (Human).